The following is a 91-amino-acid chain: Small ribosomal subunit protein uS15 (91 aa).

It belongs to the universal ribosomal protein uS15 family. As to quaternary structure, part of the 30S ribosomal subunit. Forms a bridge to the 50S subunit in the 70S ribosome, contacting the 23S rRNA.

Functionally, one of the primary rRNA binding proteins, it binds directly to 16S rRNA where it helps nucleate assembly of the platform of the 30S subunit by binding and bridging several RNA helices of the 16S rRNA. In terms of biological role, forms an intersubunit bridge (bridge B4) with the 23S rRNA of the 50S subunit in the ribosome. The sequence is that of Small ribosomal subunit protein uS15 from Legionella pneumophila (strain Paris).